Consider the following 25-residue polypeptide: Caerin-1.10 (25 aa).

Leu-25 is subject to Leucine amide.

The protein belongs to the frog skin active peptide (FSAP) family. Caerin subfamily. As to expression, expressed by the skin dorsal glands.

It localises to the secreted. Functionally, antibacterial peptide with wide spectrum of activity. This Litoria rothii (Roth's tree frog) protein is Caerin-1.10.